Consider the following 291-residue polypeptide: N-acetylmannosamine kinase (291 aa).

ATP contacts are provided by residues 5–12 (AIDIGGTK) and 132–139 (GVGGGVVS). The Zn(2+) site is built by histidine 156, cysteine 166, cysteine 168, and cysteine 173.

Belongs to the ROK (NagC/XylR) family. NanK subfamily. Homodimer.

The enzyme catalyses an N-acyl-D-mannosamine + ATP = an N-acyl-D-mannosamine 6-phosphate + ADP + H(+). It participates in amino-sugar metabolism; N-acetylneuraminate degradation; D-fructose 6-phosphate from N-acetylneuraminate: step 2/5. Its function is as follows. Catalyzes the phosphorylation of N-acetylmannosamine (ManNAc) to ManNAc-6-P. The polypeptide is N-acetylmannosamine kinase (Escherichia coli O6:K15:H31 (strain 536 / UPEC)).